Here is a 663-residue protein sequence, read N- to C-terminus: Beta-galactosidase BgaH (663 aa).

Arg-103 serves as a coordination point for substrate. Cys-107 lines the Zn(2+) pocket. A substrate-binding site is contributed by Asn-141. The Proton donor role is filled by Glu-142. The Zn(2+) site is built by Cys-151, Cys-153, and Cys-156. Glu-311 functions as the Nucleophile in the catalytic mechanism. Substrate contacts are provided by residues Trp-319 and 359 to 362; that span reads EQYH.

It belongs to the glycosyl hydrolase 42 family. In terms of assembly, homodimer.

The catalysed reaction is Hydrolysis of terminal non-reducing beta-D-galactose residues in beta-D-galactosides.. Its activity is regulated as follows. Requires 4 M NaCl for maximal activity. Loss of activity if DTT or beta-mercaptoethanol is omitted from buffers. Addition of 5-20 mM EDTA, 1 mM Cu(2+) or 1 mM Zn(2+) results in loss of activity. Functionally, when overexpressed, cleaves several different substrates including o-nitrophenyl-beta-D-galactopyranoside (ONPG), chromogen 5-bromo-4-chloro-3-indolyl-beta-D-galactopyranoside (X-Gal) and lactulose, but not lactose. Also has beta-D-fucosidase activity. No beta-L-fucosidase, beta-glucosidase, beta-arabinosidase or beta-xylosidase activity. In Haloferax lucentense (strain DSM 14919 / JCM 9276 / NCIMB 13854 / Aa 2.2) (Haloferax alicantei), this protein is Beta-galactosidase BgaH.